A 66-amino-acid chain; its full sequence is Nigrocin-2GRa (66 aa).

Residues 1–22 (MFTLKKSQLLLFFPGTINLSLC) form the signal peptide. Positions 23-45 (QDETNAEEERRDEEVAKMEEIKR) are excised as a propeptide. Cys-60 and Cys-66 are disulfide-bonded.

Expressed by the skin glands.

Its subcellular location is the secreted. In terms of biological role, antimicrobial peptide active at least against the Gram-positive bacterium S.aureus but with otherwise unclear activity spectrum. Lacks hemolytic activity against rabbit or human erythrocytes. The sequence is that of Nigrocin-2GRa from Odorrana grahami (Yunnanfu frog).